A 497-amino-acid polypeptide reads, in one-letter code: Probable zinc metalloprotease TRV_03476 (497 aa).

The signal sequence occupies residues 1 to 24 (MRFLISSLLSGLALLTSLHAFVLA). Residues asparagine 100 and asparagine 121 are each glycosylated (N-linked (GlcNAc...) asparagine). Residues histidine 171, aspartate 191, and glutamate 227 each coordinate Zn(2+). N-linked (GlcNAc...) asparagine glycosylation occurs at asparagine 242. Aspartate 254 contributes to the Zn(2+) binding site. A Fibronectin type-III domain is found at 411-497 (MPRNVRVNTN…ERGVAVLPFP (87 aa)). The N-linked (GlcNAc...) asparagine glycan is linked to asparagine 424.

This sequence belongs to the peptidase M28 family. M28B subfamily. It depends on Zn(2+) as a cofactor.

It is found in the secreted. The chain is Probable zinc metalloprotease TRV_03476 from Trichophyton verrucosum (strain HKI 0517).